Consider the following 397-residue polypeptide: Acetate kinase 2 (397 aa).

Asn-10 is a binding site for Mg(2+). Lys-17 contacts ATP. A substrate-binding site is contributed by Arg-90. Asp-147 serves as the catalytic Proton donor/acceptor. ATP contacts are provided by residues 207–211, 281–283, and 329–333; these read HLGNG, DAR, and GIGEN. Mg(2+) is bound at residue Glu-385.

It belongs to the acetokinase family. As to quaternary structure, homodimer. It depends on Mg(2+) as a cofactor. Requires Mn(2+) as cofactor.

It is found in the cytoplasm. The catalysed reaction is acetate + ATP = acetyl phosphate + ADP. The protein operates within metabolic intermediate biosynthesis; acetyl-CoA biosynthesis; acetyl-CoA from acetate: step 1/2. In terms of biological role, catalyzes the formation of acetyl phosphate from acetate and ATP. Can also catalyze the reverse reaction. This is Acetate kinase 2 from Vibrio vulnificus (strain CMCP6).